The sequence spans 433 residues: Signal recognition particle 54 kDa protein (433 aa).

GTP is bound by residues G106 to T113, D186 to R190, and T244 to D247.

It belongs to the GTP-binding SRP family. SRP54 subfamily. In terms of assembly, part of the signal recognition particle protein translocation system, which is composed of SRP and FtsY. Archaeal SRP consists of a 7S RNA molecule of 300 nucleotides and two protein subunits: SRP54 and SRP19.

It is found in the cytoplasm. The enzyme catalyses GTP + H2O = GDP + phosphate + H(+). Involved in targeting and insertion of nascent membrane proteins into the cytoplasmic membrane. Binds to the hydrophobic signal sequence of the ribosome-nascent chain (RNC) as it emerges from the ribosomes. The SRP-RNC complex is then targeted to the cytoplasmic membrane where it interacts with the SRP receptor FtsY. This chain is Signal recognition particle 54 kDa protein, found in Pyrobaculum aerophilum (strain ATCC 51768 / DSM 7523 / JCM 9630 / CIP 104966 / NBRC 100827 / IM2).